Here is a 401-residue protein sequence, read N- to C-terminus: S-adenosylmethionine synthase (401 aa).

Residue 135–140 participates in ATP binding; sequence GHGSGD.

The protein belongs to the AdoMet synthase 2 family. Requires Mg(2+) as cofactor.

The enzyme catalyses L-methionine + ATP + H2O = S-adenosyl-L-methionine + phosphate + diphosphate. The protein operates within amino-acid biosynthesis; S-adenosyl-L-methionine biosynthesis; S-adenosyl-L-methionine from L-methionine: step 1/1. Its function is as follows. Catalyzes the formation of S-adenosylmethionine from methionine and ATP. This is S-adenosylmethionine synthase (mat) from Methanothermobacter thermautotrophicus (strain ATCC 29096 / DSM 1053 / JCM 10044 / NBRC 100330 / Delta H) (Methanobacterium thermoautotrophicum).